The following is a 188-amino-acid chain: Elongation factor P (188 aa).

Belongs to the elongation factor P family.

It is found in the cytoplasm. The protein operates within protein biosynthesis; polypeptide chain elongation. In terms of biological role, involved in peptide bond synthesis. Stimulates efficient translation and peptide-bond synthesis on native or reconstituted 70S ribosomes in vitro. Probably functions indirectly by altering the affinity of the ribosome for aminoacyl-tRNA, thus increasing their reactivity as acceptors for peptidyl transferase. The polypeptide is Elongation factor P (Natranaerobius thermophilus (strain ATCC BAA-1301 / DSM 18059 / JW/NM-WN-LF)).